The following is a 715-amino-acid chain: Putative membrane protein IgaA homolog (715 aa).

5 helical membrane passes run Ser-2 to Trp-22, Glu-214 to Val-234, Thr-235 to Phe-255, Asn-349 to Leu-369, and Ala-663 to Ile-683.

It belongs to the IgaA family.

It is found in the cell inner membrane. The protein is Putative membrane protein IgaA homolog of Yersinia pestis.